A 483-amino-acid chain; its full sequence is Allantoate deiminase 1 (483 aa).

An N-terminal signal peptide occupies residues 1–30; it reads MYSATASNTFFLLSCFLLFCLLSAPSCVSM. The Mn(2+) site is built by histidine 125, aspartate 136, glutamate 173, histidine 239, and histidine 457.

It belongs to the peptidase M20A family. In terms of assembly, homodimer. It depends on Mn(2+) as a cofactor. Expressed in roots, stems and leaves. Not detected in nodules.

Its subcellular location is the endoplasmic reticulum. The enzyme catalyses allantoate + H2O + 2 H(+) = (S)-2-ureidoglycine + NH4(+) + CO2. Inhibited by borate, fluoride, L-Asn and L-Asp. In terms of biological role, involved in the catabolism of purine nucleotides. Can use allantoate as substrate. The sequential activity of AAH, UGLYAH and UAH allows a complete purine breakdown without the intermediate generation of urea. The sequence is that of Allantoate deiminase 1 from Glycine max (Soybean).